A 303-amino-acid chain; its full sequence is Probable cell division protein WhiA (303 aa).

A DNA-binding region (H-T-H motif) is located at residues 272–303 (SLQQIADSLDFAITKSGVNHRLRKINKLAEDL).

It belongs to the WhiA family.

In terms of biological role, involved in cell division and chromosome segregation. The sequence is that of Probable cell division protein WhiA from Streptococcus equi subsp. zooepidemicus (strain MGCS10565).